The sequence spans 823 residues: MSNIQNMSLEDIMGERFGRYSKYIIQDRALPDIRDGLKPVQRRILYSMNKDSNTFDKSYRKSAKSVGNIMGNFHPHGDSSIYDAMVRMSQNWKNREILVEMHGNNGSMDGDPPAAMRYTEARLSEIAGYLLQDIEKKTVPFAWNFDDTEKEPTVLPAAFPNLLVNGSTGISAGYATDIPPHNLAEVIDAAVYMIDHPTAKIDKLMEFLPGPDFPTGAIIQGRDEIKKAYETGKGRVVVRSKTEIEKLKGGKEQIVIIEIPYEINKANLVKKIDDVRVNNKVAGIAEVRDESDRDGLRIAIELKKDANTELVLNYLFKYTDLQINYNFNMVAIDNFTPRQVGIVPILSSYIAHRREVILARSRFDKEKAEKRLHIVEGLIRVISILDEVIALIRASENKADAKENLKVSYDFTEEQAEAIVTLQLYRLTNTDVVVLQEEEAELREKIAMLAAIIGDERTMYNLMKKELREVKKKFATPRLSSLEDTAKAIEIDTASLIAEEDTYVSVTKAGYIKRTSPRSFAASTLEEIGKRDDDRLIFVQSAKTTQHLLMFTSLGNVIYRPIHELADIRWKDIGEHLSQTITNFETNEEILYVEVLDQFDDATTYFAVTRLGQIKRVERKEFTPWRTYRSKSVKYAKLKDDTDQIVAVAPIKLDDVVLVSQNGYALRFNIEEVPVVGAKAAGVKAMNLKEDDVLQSGFICNTSSFYLLTQRGSLKRVSIEEILATSRAKRGLQVLRELKNKPHRVFLAGAVAEQGFVGDFFSTEVDVNDQTLLVQSNKGTIYESRLQDLNLSERTSNGSFISDTISDEEVFDAYLQEVVTEDK.

A Topo IIA-type catalytic domain is found at 30-496; the sequence is LPDIRDGLKP…KAIEIDTASL (467 aa). Y118 functions as the O-(5'-phospho-DNA)-tyrosine intermediate in the catalytic mechanism.

It belongs to the type II topoisomerase GyrA/ParC subunit family. ParC type 2 subfamily. As to quaternary structure, heterotetramer composed of ParC and ParE.

The protein localises to the cell membrane. The enzyme catalyses ATP-dependent breakage, passage and rejoining of double-stranded DNA.. Its activity is regulated as follows. Inhibited by quinolones, such as levofloxacin. Functionally, topoisomerase IV is essential for chromosome segregation. It relaxes supercoiled DNA. Performs the decatenation events required during the replication of a circular DNA molecule. This is DNA topoisomerase 4 subunit A from Streptococcus pneumoniae serotype 4 (strain ATCC BAA-334 / TIGR4).